The primary structure comprises 162 residues: Phosphopantetheine adenylyltransferase (162 aa).

Substrate is bound at residue Ser9. ATP-binding positions include 9–10 (SF) and His17. Positions 41, 77, and 91 each coordinate substrate. ATP is bound by residues 92–94 (GLR), Glu102, and 126–132 (YAFLSSS).

Belongs to the bacterial CoaD family. As to quaternary structure, homohexamer. Requires Mg(2+) as cofactor.

The protein localises to the cytoplasm. It carries out the reaction (R)-4'-phosphopantetheine + ATP + H(+) = 3'-dephospho-CoA + diphosphate. It participates in cofactor biosynthesis; coenzyme A biosynthesis; CoA from (R)-pantothenate: step 4/5. Its function is as follows. Reversibly transfers an adenylyl group from ATP to 4'-phosphopantetheine, yielding dephospho-CoA (dPCoA) and pyrophosphate. The polypeptide is Phosphopantetheine adenylyltransferase (Frankia alni (strain DSM 45986 / CECT 9034 / ACN14a)).